The following is a 391-amino-acid chain: Protein Wnt-2b (391 aa).

Disulfide bonds link Cys-107–Cys-118, Cys-158–Cys-166, Cys-168–Cys-188, Cys-237–Cys-251, and Cys-239–Cys-246. A glycan (N-linked (GlcNAc...) asparagine) is linked at Asn-117. Ser-243 carries O-palmitoleoyl serine; by PORCN lipidation. A glycan (N-linked (GlcNAc...) asparagine) is linked at Asn-283. Disulfide bonds link Cys-309/Cys-340, Cys-325/Cys-335, Cys-339/Cys-379, Cys-355/Cys-370, Cys-357/Cys-367, and Cys-362/Cys-363.

Belongs to the Wnt family. Forms a soluble 1:1 complex with AFM; this prevents oligomerization and is required for prolonged biological activity. The complex with AFM may represent the physiological form in body fluids. Interacts with FZD4 and FZD5. Post-translationally, palmitoleoylation is required for efficient binding to frizzled receptors. Depalmitoleoylation leads to Wnt signaling pathway inhibition. Isoform 1 is expressed in adult heart, brain, placenta, lung, prostate, testis, ovary, small intestine and colon. In the adult brain, it is mainly found in the caudate nucleus, subthalamic nucleus and thalamus. Also detected in fetal brain, lung and kidney. Isoform 2 is expressed in fetal brain, fetal lung, fetal kidney, caudate nucleus, testis and cancer cell lines.

Its subcellular location is the secreted. The protein resides in the extracellular space. It is found in the extracellular matrix. Its function is as follows. Ligand for members of the frizzled family of seven transmembrane receptors. Functions in the canonical Wnt/beta-catenin signaling pathway. Plays a redundant role in embryonic lung development. The sequence is that of Protein Wnt-2b (WNT2B) from Homo sapiens (Human).